The primary structure comprises 357 residues: MEQKQRRFTKNIFVLDVTAKTLCGAIAKLSSQPYCQIKIGRVVAFKPVKNPEPKGYVLNVPGPGAYRIQDGQDIISLMLTPHGVEATTERWEEWKFEGVSVTPMATRVQYNGVMVDAEIKYCKGMGIVQPYMRNDFDRNEMPDLPGVMRSNYDIRELRQKIKNERESAPRLQVHSVAPREESRWMDDDEAKVDDEAKEIVPGTSGLEKLREARSNVFKEVEAVINWNLDERDEGDRDERGDEEQVKTLSDDDDQGEDASDDEHPKTHITKEYIEKVAKQIKLKDERFMSLSSAMPQASGGFDRMIVTKKLKWQNVPLYCFDESLKRYELQCVGACERVAFVSKDMSLIICRSAFRRL.

2 disordered regions span residues 169 to 191 (PRLQ…DEAK) and 229 to 266 (DERD…HPKT). A compositionally biased stretch (basic and acidic residues) spans 233-249 (EGDRDERGDEEQVKTLS). Acidic residues predominate over residues 250–260 (DDDDQGEDASD).

This sequence belongs to the orbivirus non-structural protein NS2 family.

Its function is as follows. Single-stranded RNA-binding protein. This Antilocapra americana (Pronghorn) protein is Non-structural protein NS2 (Segment-8).